The following is a 228-amino-acid chain: uncharacterized protein (228 aa).

Its subcellular location is the mitochondrion. This is an uncharacterized protein from Emericella nidulans (Aspergillus nidulans).